Consider the following 287-residue polypeptide: mRNA-capping enzyme regulatory subunit OPG124 (287 aa).

The protein belongs to the orthopoxvirus mRNA-capping enzyme regulatory subunit family. In terms of assembly, interacts with the catalytic subunit OPG113.

The protein resides in the virion. Regulatory subunit of the mRNA cap enzyme which stabilizes the catalytic subunit and enhances its methyltransferase activity through an allosteric mechanism. Heterodimeric mRNA capping enzyme catalyzes the linkage of a N7-methyl-guanosine moiety to the first transcribed nucleotide (cap 0 structure), whereas the methyltransferase OPG102 is responsible for a second methylation at the 2'-O position of the ribose (cap 1 structure). Also involved in early viral gene transcription termination and intermediate viral gene transcription initiation. Early gene transcription termination requires the termination factor VTF, the DNA-dependent ATPase NPH-I/OPG123 and the RAP94/OPG109 subunit of the viral RNA polymerase, as well as the presence of a specific termination motif. Binds, together with RAP94/OPG109, to the termination motif 5'-UUUUUNU-3' in the nascent early mRNA. In Bos taurus (Bovine), this protein is mRNA-capping enzyme regulatory subunit OPG124 (OPG124).